Reading from the N-terminus, the 420-residue chain is Putative epoxide hydrolase (420 aa).

The protein belongs to the peptidase S33 family.

The protein operates within mycotoxin biosynthesis. Its function is as follows. Putative epoxide hydrolase; part of the fragmented gene cluster that mediates the biosynthesis of dothistromin (DOTH), a polyketide toxin very similar in structure to the aflatoxin precursor, versicolorin B. The first step of the pathway is the conversion of acetate to norsolorinic acid (NOR) and requires the fatty acid synthase subunits hexA and hexB, as well as the polyketide synthase pksA. PksA combines a hexanoyl starter unit and 7 malonyl-CoA extender units to synthesize the precursor NOR. The hexanoyl starter unit is provided to the acyl-carrier protein (ACP) domain by the fungal fatty acid synthase hexA/hexB. The second step is the conversion of NOR to averantin (AVN) and requires the norsolorinic acid ketoreductase nor1, which catalyzes the dehydration of norsolorinic acid to form (1'S)-averantin. The cytochrome P450 monooxygenase avnA then catalyzes the hydroxylation of AVN to 5'hydroxyaverantin (HAVN). The next step is performed by adhA that transforms HAVN to averufin (AVF). Averufin might then be converted to hydroxyversicolorone by cypX and avfA. Hydroxyversicolorone is further converted versiconal hemiacetal acetate (VHA) by moxY. VHA is then the substrate for the versiconal hemiacetal acetate esterase est1 to yield versiconal (VAL). Versicolorin B synthase vbsA then converts VAL to versicolorin B (VERB) by closing the bisfuran ring. Then, the activity of the versicolorin B desaturase verB leads to versicolorin A (VERA). DotB, a predicted chloroperoxidase, may perform epoxidation of the A-ring of VERA. Alternatively, a cytochrome P450, such as cypX or avnA could catalyze this step. It is also possible that another, uncharacterized, cytochrome P450 enzyme is responsible for this step. Opening of the epoxide could potentially be achieved by the epoxide hydrolase epoA. However, epoA seems not to be required for DOTH biosynthesis, but other epoxide hydrolases may have the ability to complement this hydrolysis. Alternatively, opening of the epoxide ring could be achieved non-enzymatically. The next step is the deoxygenation of ring A to yield the 5,8-dihydroxyanthraquinone which is most likely catalyzed by the NADPH dehydrogenase encoded by ver1. The last stages of DOTH biosynthesis are proposed to involve hydroxylation of the bisfuran. OrdB and norB might have oxidative roles here. An alternative possibility is that cytochrome P450 monoogenases such as avnA and cypX might perform these steps in addition to previously proposed steps. The chain is Putative epoxide hydrolase from Dothistroma septosporum (Red band needle blight fungus).